Reading from the N-terminus, the 552-residue chain is Non-structural protein NS1 (552 aa).

Belongs to the orbivirus non-structural protein NS1 family.

This Antilocapra americana (Pronghorn) protein is Non-structural protein NS1 (Segment-5).